The sequence spans 126 residues: Large ribosomal subunit protein bL12 (126 aa).

The protein belongs to the bacterial ribosomal protein bL12 family. Homodimer. Part of the ribosomal stalk of the 50S ribosomal subunit. Forms a multimeric L10(L12)X complex, where L10 forms an elongated spine to which 2 to 4 L12 dimers bind in a sequential fashion. Binds GTP-bound translation factors.

Its function is as follows. Forms part of the ribosomal stalk which helps the ribosome interact with GTP-bound translation factors. Is thus essential for accurate translation. In Citrifermentans bemidjiense (strain ATCC BAA-1014 / DSM 16622 / JCM 12645 / Bem) (Geobacter bemidjiensis), this protein is Large ribosomal subunit protein bL12.